The following is a 201-amino-acid chain: Probable phosphopantothenoylcysteine decarboxylase (201 aa).

FMN-binding positions include 20 to 22 (GSV), 45 to 47 (SKS), 98 to 101 (SANT), and A132. Residues N134 and 164–166 (KLA) contribute to the substrate site. The Proton donor role is filled by C167. M175 provides a ligand contact to substrate.

It belongs to the HFCD (homooligomeric flavin containing Cys decarboxylase) superfamily. Homotrimer. FMN is required as a cofactor. In terms of tissue distribution, expressed in roots, shoots, leaves, flowers, developing siliques and seeds.

The enzyme catalyses N-[(R)-4-phosphopantothenoyl]-L-cysteine + H(+) = (R)-4'-phosphopantetheine + CO2. Its pathway is cofactor biosynthesis; coenzyme A biosynthesis; CoA from (R)-pantothenate: step 3/5. Functionally, involved in plant growth and salt and osmotic tolerance. Catalyzes the decarboxylation of 4'-phosphopantothenoylcysteine to 4'-phosphopantetheine, a key step in coenzyme A biosynthesis. The enzyme is also able to decarboxylate pantothenoylcysteine to pantothenoylcysteamine. This is Probable phosphopantothenoylcysteine decarboxylase (HAL3B) from Arabidopsis thaliana (Mouse-ear cress).